A 368-amino-acid polypeptide reads, in one-letter code: Polymerase delta-interacting protein 2 (368 aa).

Residues Met-1–Leu-51 constitute a mitochondrion transit peptide. The ApaG domain occupies Arg-235–Lys-360. The residue at position 292 (Thr-292) is a Phosphothreonine.

Interacts with PCNA and POLD2. Interacts with SSBP1. Interacts with PRIMPOL; leading to enhance DNA polymerase activity of PRIMPOL. Interacts with POLH. Interacts with POLD1; leading to stimulate DNA polymerase activity of POLD1.

It localises to the mitochondrion matrix. Its subcellular location is the nucleus. Functionally, involved in DNA damage tolerance by regulating translesion synthesis (TLS) of templates carrying DNA damage lesions such as 8oxoG and abasic sites. May act by stimulating activity of DNA polymerases involved in TLS, such as PRIMPOL and polymerase delta (POLD1). The chain is Polymerase delta-interacting protein 2 from Homo sapiens (Human).